Here is a 244-residue protein sequence, read N- to C-terminus: 27 kDa core protein (244 aa).

Belongs to the chordopoxvirinae D3 family.

It is found in the virion. In terms of biological role, late protein which is part of a large complex required for early virion morphogenesis. This complex participates in the formation of virosomes and the incorporation of virosomal contents into nascent immature virions. The polypeptide is 27 kDa core protein (Swinepox virus (strain Swine/Nebraska/17077-99/1999) (SWPV)).